The sequence spans 668 residues: Eukaryotic translation initiation factor 3 subunit L (668 aa).

Polar residues predominate over residues 1 to 17; sequence MVADASQQGQSNGAAFN. A disordered region spans residues 1-42; that stretch reads MVADASQQGQSNGAAFNQQQQYQQQQQRQLFGGEEEFGDEEE. Positions 18-32 are enriched in low complexity; that stretch reads QQQQYQQQQQRQLFG. Residues 33-42 show a composition bias toward acidic residues; sequence GEEEFGDEEE. The PCI domain occupies 358-552; it reads SFTHILVFIM…QVVNTSDLDF (195 aa). The disordered stretch occupies residues 625 to 668; that stretch reads AGVKAGPPAFSQRSGGAGRSSVNKSAPAPAGAWGSSKPQPSVTA. The span at 648-662 shows a compositional bias: low complexity; the sequence is KSAPAPAGAWGSSKP.

This sequence belongs to the eIF-3 subunit L family. Component of the eukaryotic translation initiation factor 3 (eIF-3) complex.

The protein resides in the cytoplasm. Component of the eukaryotic translation initiation factor 3 (eIF-3) complex, which is involved in protein synthesis of a specialized repertoire of mRNAs and, together with other initiation factors, stimulates binding of mRNA and methionyl-tRNAi to the 40S ribosome. The eIF-3 complex specifically targets and initiates translation of a subset of mRNAs involved in cell proliferation. The chain is Eukaryotic translation initiation factor 3 subunit L from Mycosarcoma maydis (Corn smut fungus).